The chain runs to 247 residues: Probable transcriptional regulatory protein GTNG_2524 (247 aa).

Basic residues predominate over residues 1-14; sequence MAGHSKWKNIQRRK. Positions 1–21 are disordered; the sequence is MAGHSKWKNIQRRKNAQDAKR.

Belongs to the TACO1 family.

Its subcellular location is the cytoplasm. The protein is Probable transcriptional regulatory protein GTNG_2524 of Geobacillus thermodenitrificans (strain NG80-2).